We begin with the raw amino-acid sequence, 212 residues long: Cytidylate kinase (212 aa).

Residue 7-15 (GPAASGKGT) participates in ATP binding.

Belongs to the cytidylate kinase family. Type 1 subfamily.

The protein localises to the cytoplasm. The enzyme catalyses CMP + ATP = CDP + ADP. It catalyses the reaction dCMP + ATP = dCDP + ADP. The chain is Cytidylate kinase from Rhodopseudomonas palustris (strain ATCC BAA-98 / CGA009).